A 572-amino-acid polypeptide reads, in one-letter code: Phospholipase B-like protein B (572 aa).

A signal peptide spans 1-28 (MNKLKSNFILNIVILFTILIFNINFINC). 6 N-linked (GlcNAc...) asparagine glycosylation sites follow: Asn-73, Asn-138, Asn-219, Asn-427, Asn-544, and Asn-564.

It belongs to the phospholipase B-like family.

It localises to the secreted. In terms of biological role, probable phospholipase. In Dictyostelium discoideum (Social amoeba), this protein is Phospholipase B-like protein B (plbB).